A 307-amino-acid polypeptide reads, in one-letter code: MPIYLDLIWMLNFGLDTILLMLCAVVLKRNYKWWRLLLGGFIGSLIVLLMFTPFSHLMVHPAIKILFSFFMVLMTFGYKRLRFFFENLLTFYFATFVVGGGLMGVHFLFQDQFLVLNQMVDTKSPQFGDPISWIFVLIGFPLLSYFSKTRVDDLRIKNITFDQLVDVEIILNEQTLSMKGLIDSGNQLVDPLTKTPVMIVTADSLKEILPEGLMELSKNVQSFSHSEDIDQEWYSKVRFVPYRSVGQANQLLLALKPDMVRLVHQSNTIEVTKVLVGISHTTLSVEKQYECIVHPKLIVIGEVSSAS.

The next 5 helical transmembrane spans lie at 7–27 (LIWMLNFGLDTILLMLCAVVL), 36–56 (LLLGGFIGSLIVLLMFTPFSH), 57–77 (LMVHPAIKILFSFFMVLMTFG), 89–109 (LTFYFATFVVGGGLMGVHFLF), and 127–147 (FGDPISWIFVLIGFPLLSYFS). D183 is an active-site residue.

It belongs to the peptidase U4 family. Self-associates. Interacts with SigE. Interacts with SpoIIR.

It is found in the cell membrane. Its function is as follows. Probable aspartic protease that is responsible for the proteolytic cleavage of the RNA polymerase sigma E factor (SigE/spoIIGB) to yield the active peptide in the mother cell during sporulation. Responds to a signal from the forespore that is triggered by the extracellular signal protein SpoIIR. The polypeptide is Sporulation sigma-E factor-processing peptidase (Priestia megaterium (strain ATCC 12872 / QMB1551) (Bacillus megaterium)).